A 342-amino-acid chain; its full sequence is Glycerol-3-phosphate dehydrogenase [NAD(P)+] (342 aa).

Positions 11, 33, and 107 each coordinate NADPH. Positions 107, 143, and 145 each coordinate sn-glycerol 3-phosphate. Alanine 147 contributes to the NADPH binding site. Lysine 198, aspartate 251, serine 261, arginine 262, and asparagine 263 together coordinate sn-glycerol 3-phosphate. The active-site Proton acceptor is the lysine 198. Arginine 262 contributes to the NADPH binding site. Valine 286 and glutamate 288 together coordinate NADPH.

It belongs to the NAD-dependent glycerol-3-phosphate dehydrogenase family.

Its subcellular location is the cytoplasm. The enzyme catalyses sn-glycerol 3-phosphate + NAD(+) = dihydroxyacetone phosphate + NADH + H(+). It catalyses the reaction sn-glycerol 3-phosphate + NADP(+) = dihydroxyacetone phosphate + NADPH + H(+). It participates in membrane lipid metabolism; glycerophospholipid metabolism. Functionally, catalyzes the reduction of the glycolytic intermediate dihydroxyacetone phosphate (DHAP) to sn-glycerol 3-phosphate (G3P), the key precursor for phospholipid synthesis. This Paracidovorax citrulli (strain AAC00-1) (Acidovorax citrulli) protein is Glycerol-3-phosphate dehydrogenase [NAD(P)+].